Consider the following 77-residue polypeptide: Small ribosomal subunit protein bS20 (77 aa).

Belongs to the bacterial ribosomal protein bS20 family.

In terms of biological role, binds directly to 16S ribosomal RNA. The polypeptide is Small ribosomal subunit protein bS20 (Streptococcus uberis (strain ATCC BAA-854 / 0140J)).